The sequence spans 540 residues: Arylsulfatase K (540 aa).

An N-terminal signal peptide occupies residues 1-22; that stretch reads MLLLWVSVVAASALAAPAPGAD. Ca(2+) contacts are provided by D44 and C84. C84 acts as the Nucleophile in catalysis. At C84 the chain carries 3-oxoalanine (Cys). N112 is a glycosylation site (N-linked (GlcNAc...) asparagine). K132 is a substrate binding site. An N-linked (GlcNAc...) asparagine glycan is attached at N197. Position 255 (H255) interacts with substrate. N266 is a glycosylation site (N-linked (GlcNAc...) asparagine). Ca(2+) is bound by residues D317 and H318. Residues N379, N417, and N502 are each glycosylated (N-linked (GlcNAc...) asparagine).

This sequence belongs to the sulfatase family. It depends on Ca(2+) as a cofactor. Post-translationally, the conversion to 3-oxoalanine (also known as C-formylglycine, FGly), of a serine or cysteine residue in prokaryotes and of a cysteine residue in eukaryotes, is critical for catalytic activity. The 75-kDa precursor undergoes proteolytic processing to yield a 23 kDa form. In terms of processing, N-glycosylated with both high mannose and complex type sugars.

The protein localises to the secreted. Its subcellular location is the lysosome. It carries out the reaction an aryl sulfate + H2O = a phenol + sulfate + H(+). The enzyme catalyses Hydrolysis of the 2-sulfate groups of the 2-O-sulfo-D-glucuronate residues of chondroitin sulfate, heparin and heparitin sulfate.. Its function is as follows. Catalyzes the hydrolysis of pseudosubstrates such as p-nitrocatechol sulfate and p-nitrophenyl sulfate. Catalyzes the hydrolysis of the 2-sulfate groups of the 2-O-sulfo-D-glucuronate residues of chondroitin sulfate, heparin and heparitin sulfate. Acts selectively on 2-sulfoglucuronate and lacks activity against 2-sulfoiduronate. The sequence is that of Arylsulfatase K (ARSK) from Bos taurus (Bovine).